Consider the following 196-residue polypeptide: Large ribosomal subunit protein bL17 (196 aa).

Residues A133–K196 form a disordered region. The segment covering A134–A143 has biased composition (basic and acidic residues). Acidic residues predominate over residues E152–A164. Residues A184–K196 are compositionally biased toward basic and acidic residues.

This sequence belongs to the bacterial ribosomal protein bL17 family. Part of the 50S ribosomal subunit. Contacts protein L32.

In Arthrobacter sp. (strain FB24), this protein is Large ribosomal subunit protein bL17.